The following is a 374-amino-acid chain: Alanine racemase (374 aa).

Lys-34 (proton acceptor; specific for D-alanine) is an active-site residue. Lys-34 bears the N6-(pyridoxal phosphate)lysine mark. Substrate is bound at residue Arg-147. Tyr-271 functions as the Proton acceptor; specific for L-alanine in the catalytic mechanism. Residue Met-319 coordinates substrate.

This sequence belongs to the alanine racemase family. Pyridoxal 5'-phosphate serves as cofactor.

The enzyme catalyses L-alanine = D-alanine. The protein operates within amino-acid biosynthesis; D-alanine biosynthesis; D-alanine from L-alanine: step 1/1. In terms of biological role, catalyzes the interconversion of L-alanine and D-alanine. May also act on other amino acids. In Actinobacillus pleuropneumoniae serotype 5b (strain L20), this protein is Alanine racemase (alr).